The chain runs to 410 residues: NIPA-like protein 3 (410 aa).

The disordered stretch occupies residues 1–24 (MDGAHSAGLQLQPLPPTSGATSTS). The next 9 membrane-spanning stretches (helical) occupy residues 37 to 57 (NLIG…ALNL), 80 to 100 (WWLG…SYAF), 105 to 125 (LIVP…IIFI), 139 to 159 (VLSF…VTFA), 175 to 195 (LVSW…CLLL), 206 to 226 (IVVI…TVKA), 244 to 264 (PIFY…ATFL), 275 to 295 (LIAS…GAIF), and 304 to 324 (ALHI…VFLI). Phosphoserine is present on Ser376. Residues 389–410 (EEHSSRSTPGVPYRVLEHTKKE) form a disordered region.

This sequence belongs to the NIPA family.

Its subcellular location is the membrane. This Mus musculus (Mouse) protein is NIPA-like protein 3 (Nipal3).